The chain runs to 285 residues: Acetylglutamate kinase (285 aa).

Residues 55 to 56 (GG), R77, and N171 contribute to the substrate site.

Belongs to the acetylglutamate kinase family. ArgB subfamily.

It localises to the cytoplasm. The enzyme catalyses N-acetyl-L-glutamate + ATP = N-acetyl-L-glutamyl 5-phosphate + ADP. It functions in the pathway amino-acid biosynthesis; L-arginine biosynthesis; N(2)-acetyl-L-ornithine from L-glutamate: step 2/4. Its function is as follows. Catalyzes the ATP-dependent phosphorylation of N-acetyl-L-glutamate. This is Acetylglutamate kinase from Chlorobaculum tepidum (strain ATCC 49652 / DSM 12025 / NBRC 103806 / TLS) (Chlorobium tepidum).